The following is a 351-amino-acid chain: Peptide chain release factor 1 (351 aa).

Position 229 is an N5-methylglutamine (Q229).

The protein belongs to the prokaryotic/mitochondrial release factor family. In terms of processing, methylated by PrmC. Methylation increases the termination efficiency of RF1.

The protein localises to the cytoplasm. Peptide chain release factor 1 directs the termination of translation in response to the peptide chain termination codons UAG and UAA. The protein is Peptide chain release factor 1 of Cereibacter sphaeroides (strain ATCC 17029 / ATH 2.4.9) (Rhodobacter sphaeroides).